The following is a 62-amino-acid chain: UPF0339 protein Atu0232 (62 aa).

Belongs to the UPF0339 family.

In Agrobacterium fabrum (strain C58 / ATCC 33970) (Agrobacterium tumefaciens (strain C58)), this protein is UPF0339 protein Atu0232.